The primary structure comprises 160 residues: Cytochrome c-type biogenesis protein CcmE (160 aa).

The Cytoplasmic segment spans residues 1–8 (MNPRRKKR). The helical; Signal-anchor for type II membrane protein transmembrane segment at 9–29 (LGIILAIFFGISATVGLMVYA) threads the bilayer. Residues 30-160 (LNQNMDLFYT…TTEQKEGNAQ (131 aa)) are Periplasmic-facing. Heme is bound by residues His-128 and Tyr-132.

This sequence belongs to the CcmE/CycJ family.

The protein resides in the cell inner membrane. Its function is as follows. Heme chaperone required for the biogenesis of c-type cytochromes. Transiently binds heme delivered by CcmC and transfers the heme to apo-cytochromes in a process facilitated by CcmF and CcmH. The chain is Cytochrome c-type biogenesis protein CcmE from Vibrio atlanticus (strain LGP32) (Vibrio splendidus (strain Mel32)).